Consider the following 57-residue polypeptide: DELTA-limacoditoxin(2)-Dv11 (57 aa).

The first 24 residues, Met-1–Pro-24, serve as a signal peptide directing secretion.

This sequence belongs to the limacoditoxin-2 (cecropin-like) family. In terms of tissue distribution, expressed by the venom secretory cell of the spine. The spine is a cuticular structure containing a single large nucleated venom-secreting cell at its base. It is an independent unit capable of producing, storing and injecting venom. On the back of D.vulnerans caterpillars, spines are grouped together by 50 to 100 to form scoli, of which there are eight in D.vulnerans.

Its subcellular location is the secreted. Functionally, peptide that induces pain in mammals and has insecticidal, antibacterial and antiparasitic activities. Induces partially reversible paralysis in D.melanogaster when tested at high doses. Shows a moderate antiparasitic activity against the major pathogenic nematode of ruminants (H.contortus, EC(50)=30.5 uM). Has potent or moderate antibacterial activities against A.baumannii (MIC&lt;0.25 ug/mL) and S.aureus (MIC=16 ug/mL). Has no activity on the other bacteria tested, nor on the fungus C.albicans. Strongly induces the increase of intracellular calcium in mice DRG neurons, which is a proxy for neuronal activation that would occur during nociception. This increase is due to influx of extracellular calcium, suggesting that the peptide forms pore or channel in neuronal cell membranes. In addition, intraplantar injection in mice provokes nocifensive behavior, suggesting a pain-inducing activity. The polypeptide is DELTA-limacoditoxin(2)-Dv11 (Doratifera vulnerans (Mottled cup moth)).